The chain runs to 204 residues: Thiamine-phosphate synthase (204 aa).

4-amino-2-methyl-5-(diphosphooxymethyl)pyrimidine-binding positions include 32-36 (QLRMK) and aspartate 64. Residues aspartate 65 and aspartate 84 each contribute to the Mg(2+) site. Threonine 103 provides a ligand contact to 4-amino-2-methyl-5-(diphosphooxymethyl)pyrimidine. 129–131 (TTT) is a 2-[(2R,5Z)-2-carboxy-4-methylthiazol-5(2H)-ylidene]ethyl phosphate binding site. Lysine 132 is a binding site for 4-amino-2-methyl-5-(diphosphooxymethyl)pyrimidine. Glycine 165 is a binding site for 2-[(2R,5Z)-2-carboxy-4-methylthiazol-5(2H)-ylidene]ethyl phosphate.

The protein belongs to the thiamine-phosphate synthase family. Mg(2+) serves as cofactor.

The catalysed reaction is 2-[(2R,5Z)-2-carboxy-4-methylthiazol-5(2H)-ylidene]ethyl phosphate + 4-amino-2-methyl-5-(diphosphooxymethyl)pyrimidine + 2 H(+) = thiamine phosphate + CO2 + diphosphate. The enzyme catalyses 2-(2-carboxy-4-methylthiazol-5-yl)ethyl phosphate + 4-amino-2-methyl-5-(diphosphooxymethyl)pyrimidine + 2 H(+) = thiamine phosphate + CO2 + diphosphate. It carries out the reaction 4-methyl-5-(2-phosphooxyethyl)-thiazole + 4-amino-2-methyl-5-(diphosphooxymethyl)pyrimidine + H(+) = thiamine phosphate + diphosphate. It participates in cofactor biosynthesis; thiamine diphosphate biosynthesis; thiamine phosphate from 4-amino-2-methyl-5-diphosphomethylpyrimidine and 4-methyl-5-(2-phosphoethyl)-thiazole: step 1/1. Functionally, condenses 4-methyl-5-(beta-hydroxyethyl)thiazole monophosphate (THZ-P) and 2-methyl-4-amino-5-hydroxymethyl pyrimidine pyrophosphate (HMP-PP) to form thiamine monophosphate (TMP). The protein is Thiamine-phosphate synthase of Bacteroides fragilis (strain ATCC 25285 / DSM 2151 / CCUG 4856 / JCM 11019 / LMG 10263 / NCTC 9343 / Onslow / VPI 2553 / EN-2).